Consider the following 88-residue polypeptide: Large ribosomal subunit protein bL27 (88 aa).

The segment at 1–21 is disordered; sequence MAHKKGASSSRNGRDSAAQRL.

This sequence belongs to the bacterial ribosomal protein bL27 family.

The chain is Large ribosomal subunit protein bL27 from Mycobacterium sp. (strain MCS).